Consider the following 87-residue polypeptide: Elastase inhibitor AFLEI (87 aa).

Positions 1-19 (MKFSLACLLALAGLQAALA) are cleaved as a signal peptide. Cys-24 and Cys-86 form a disulfide bridge.

The protein localises to the secreted. Its function is as follows. Elastase inhibitor. This chain is Elastase inhibitor AFLEI, found in Aspergillus fumigatus (strain CBS 144.89 / FGSC A1163 / CEA10) (Neosartorya fumigata).